Consider the following 239-residue polypeptide: Type III pantothenate kinase (239 aa).

ATP is bound at residue 6-13; the sequence is DAGNTRLK. Substrate contacts are provided by residues tyrosine 87 and 94-97; that span reads GADR. Residue aspartate 96 is the Proton acceptor of the active site. ATP is bound at residue threonine 119. Serine 169 provides a ligand contact to substrate.

Belongs to the type III pantothenate kinase family. As to quaternary structure, homodimer. NH4(+) is required as a cofactor. K(+) serves as cofactor.

Its subcellular location is the cytoplasm. It carries out the reaction (R)-pantothenate + ATP = (R)-4'-phosphopantothenate + ADP + H(+). The protein operates within cofactor biosynthesis; coenzyme A biosynthesis; CoA from (R)-pantothenate: step 1/5. Catalyzes the phosphorylation of pantothenate (Pan), the first step in CoA biosynthesis. This Laribacter hongkongensis (strain HLHK9) protein is Type III pantothenate kinase.